The chain runs to 246 residues: uncharacterized protein (246 aa).

The N-terminal stretch at 1–30 (MKKKQVSHAIIISVMLSFVIAVFHTIHASE) is a signal peptide.

This is an uncharacterized protein from Bacillus subtilis (strain 168).